We begin with the raw amino-acid sequence, 135 residues long: Large ribosomal subunit protein uL16c (135 aa).

N-methylmethionine is present on Met1.

In terms of assembly, component of the chloroplast large ribosomal subunit (LSU). Mature 70S chloroplast ribosomes of higher plants consist of a small (30S) and a large (50S) subunit. The 30S small subunit contains 1 molecule of ribosomal RNA (16S rRNA) and 24 different proteins. The 50S large subunit contains 3 rRNA molecules (23S, 5S and 4.5S rRNA) and 33 different proteins. Partially alpha-N-monomethylated at Met-1 (10%), whereas 90% of it is blocked to Edman degradation, probably by trimethylation.

It localises to the plastid. Its subcellular location is the chloroplast. In terms of biological role, component of the chloroplast ribosome (chloro-ribosome), a dedicated translation machinery responsible for the synthesis of chloroplast genome-encoded proteins, including proteins of the transcription and translation machinery and components of the photosynthetic apparatus. The sequence is that of Large ribosomal subunit protein uL16c from Spinacia oleracea (Spinach).